Here is a 130-residue protein sequence, read N- to C-terminus: NADH-quinone oxidoreductase subunit A (130 aa).

Transmembrane regions (helical) follow at residues 17-37, 74-94, and 99-119; these read YIFV…MLAL, LVGI…PWAV, and LGPA…VGFV.

This sequence belongs to the complex I subunit 3 family. NDH-1 is composed of 14 different subunits. Subunits NuoA, H, J, K, L, M, N constitute the membrane sector of the complex.

It is found in the cell inner membrane. It catalyses the reaction a quinone + NADH + 5 H(+)(in) = a quinol + NAD(+) + 4 H(+)(out). NDH-1 shuttles electrons from NADH, via FMN and iron-sulfur (Fe-S) centers, to quinones in the respiratory chain. The immediate electron acceptor for the enzyme in this species is believed to be ubiquinone. Couples the redox reaction to proton translocation (for every two electrons transferred, four hydrogen ions are translocated across the cytoplasmic membrane), and thus conserves the redox energy in a proton gradient. This Neorickettsia sennetsu (strain ATCC VR-367 / Miyayama) (Ehrlichia sennetsu) protein is NADH-quinone oxidoreductase subunit A.